A 407-amino-acid chain; its full sequence is Formamidase (407 aa).

Homotrimer.

It carries out the reaction formamide + H2O = formate + NH4(+). Functionally, hydrolyzes formamide with the production of ammonia which can be used as a source of nitrogen for growth. Also acts, more slowly, on acetamide, propanamide and butanamide. This is Formamidase (fmdA) from Methylophilus methylotrophus (Bacterium W3A1).